The sequence spans 182 residues: Adenylate kinase isoenzyme 6 homolog (182 aa).

The interval 1–20 (MATPETRRRPNILVTGSPGT) is disordered. 5 residues coordinate ATP: G19, G21, K22, S23, and T24. The tract at residues 39-62 (EVSKEVRENNLQGDFDEQYNCHVL) is NMPbind. The segment at 116–126 (SRGYSEFKIKE) is LID. R117 is a binding site for ATP.

The protein belongs to the adenylate kinase family. AK6 subfamily. Monomer and homodimer. Interacts with small ribosomal subunit protein uS11. Not a structural component of 43S pre-ribosomes, but transiently interacts with them by binding to uS11.

Its subcellular location is the cytoplasm. The protein localises to the nucleus. The catalysed reaction is AMP + ATP = 2 ADP. It carries out the reaction ATP + H2O = ADP + phosphate + H(+). In terms of biological role, broad-specificity nucleoside monophosphate (NMP) kinase that catalyzes the reversible transfer of the terminal phosphate group between nucleoside triphosphates and monophosphates. Also has ATPase activity. Involved in the late cytoplasmic maturation steps of the 40S ribosomal particles, specifically 18S rRNA maturation. While NMP activity is not required for ribosome maturation, ATPase activity is. Associates transiently with small ribosomal subunit protein uS11. ATP hydrolysis breaks the interaction with uS11. May temporarily remove uS11 from the ribosome to enable a conformational change of the ribosomal RNA that is needed for the final maturation step of the small ribosomal subunit. Its NMP activity may have a role in nuclear energy homeostasis. AMP and dAMP are the preferred substrates, but CMP and TMP are also good substrates. ATP and dATP are the best phosphate donors. This chain is Adenylate kinase isoenzyme 6 homolog, found in Caenorhabditis elegans.